A 427-amino-acid polypeptide reads, in one-letter code: Glutamyl-tRNA reductase (427 aa).

Residues 49–52 (TCNR), Ser-105, 110–112 (EPQ), and Gln-116 contribute to the substrate site. Cys-50 (nucleophile) is an active-site residue. NADP(+) is bound at residue 185–190 (AAGEMN).

It belongs to the glutamyl-tRNA reductase family. As to quaternary structure, homodimer.

The catalysed reaction is (S)-4-amino-5-oxopentanoate + tRNA(Glu) + NADP(+) = L-glutamyl-tRNA(Glu) + NADPH + H(+). The protein operates within porphyrin-containing compound metabolism; protoporphyrin-IX biosynthesis; 5-aminolevulinate from L-glutamyl-tRNA(Glu): step 1/2. Catalyzes the NADPH-dependent reduction of glutamyl-tRNA(Glu) to glutamate 1-semialdehyde (GSA). The sequence is that of Glutamyl-tRNA reductase from Acinetobacter baumannii (strain AB307-0294).